A 687-amino-acid polypeptide reads, in one-letter code: Phage-like element PBSX protein XkdV (687 aa).

This sequence to B.subtilis YqcC.

This is Phage-like element PBSX protein XkdV (xkdV) from Bacillus subtilis (strain 168).